The chain runs to 39 residues: Photosystem II reaction center protein J (39 aa).

The chain crosses the membrane as a helical span at residues 7 to 27; the sequence is IPLWLVATVAGMGVITLLGIF.

Belongs to the PsbJ family. PSII is composed of 1 copy each of membrane proteins PsbA, PsbB, PsbC, PsbD, PsbE, PsbF, PsbH, PsbI, PsbJ, PsbK, PsbL, PsbM, PsbT, PsbX, PsbY, PsbZ, Psb30/Ycf12, peripheral proteins PsbO, CyanoQ (PsbQ), PsbU, PsbV and a large number of cofactors. It forms dimeric complexes.

It localises to the cellular thylakoid membrane. One of the components of the core complex of photosystem II (PSII). PSII is a light-driven water:plastoquinone oxidoreductase that uses light energy to abstract electrons from H(2)O, generating O(2) and a proton gradient subsequently used for ATP formation. It consists of a core antenna complex that captures photons, and an electron transfer chain that converts photonic excitation into a charge separation. In Cyanothece sp. (strain PCC 7425 / ATCC 29141), this protein is Photosystem II reaction center protein J.